The sequence spans 465 residues: L-seryl-tRNA(Sec) selenium transferase (465 aa).

N6-(pyridoxal phosphate)lysine is present on Lys-294.

Belongs to the SelA family. It depends on pyridoxal 5'-phosphate as a cofactor.

The protein resides in the cytoplasm. The catalysed reaction is L-seryl-tRNA(Sec) + selenophosphate + H(+) = L-selenocysteinyl-tRNA(Sec) + phosphate. It participates in aminoacyl-tRNA biosynthesis; selenocysteinyl-tRNA(Sec) biosynthesis; selenocysteinyl-tRNA(Sec) from L-seryl-tRNA(Sec) (bacterial route): step 1/1. Converts seryl-tRNA(Sec) to selenocysteinyl-tRNA(Sec) required for selenoprotein biosynthesis. In Maridesulfovibrio salexigens (strain ATCC 14822 / DSM 2638 / NCIMB 8403 / VKM B-1763) (Desulfovibrio salexigens), this protein is L-seryl-tRNA(Sec) selenium transferase.